A 158-amino-acid polypeptide reads, in one-letter code: MAKKPNKSDNTIAKNRTARHEFAIQDDYEAGLQLQGWEVKAIRNGKVNIAESYVFLRDGEAFISGVTITPLNAASTHVVADPTRTRKLLLNRKEIDKLLGAVNREGQTIVALSMYWKASWVKLKIGTARGKKLHDKRADSKSRDWARDKQRIMKHSTR.

Positions 136-151 (KRADSKSRDWARDKQR) are enriched in basic and acidic residues. The segment at 136 to 158 (KRADSKSRDWARDKQRIMKHSTR) is disordered.

It belongs to the SmpB family.

The protein resides in the cytoplasm. Functionally, required for rescue of stalled ribosomes mediated by trans-translation. Binds to transfer-messenger RNA (tmRNA), required for stable association of tmRNA with ribosomes. tmRNA and SmpB together mimic tRNA shape, replacing the anticodon stem-loop with SmpB. tmRNA is encoded by the ssrA gene; the 2 termini fold to resemble tRNA(Ala) and it encodes a 'tag peptide', a short internal open reading frame. During trans-translation Ala-aminoacylated tmRNA acts like a tRNA, entering the A-site of stalled ribosomes, displacing the stalled mRNA. The ribosome then switches to translate the ORF on the tmRNA; the nascent peptide is terminated with the 'tag peptide' encoded by the tmRNA and targeted for degradation. The ribosome is freed to recommence translation, which seems to be the essential function of trans-translation. This Photobacterium profundum (strain SS9) protein is SsrA-binding protein.